The chain runs to 455 residues: Chromosomal replication initiator protein DnaA (455 aa).

Positions 1-82 (MNRNTSSLWA…NPDFVVKLVE (82 aa)) are domain I, interacts with DnaA modulators. The tract at residues 82–117 (EGVKPAPKQNNIVTTKQNAETAVDSEQHLQSVEFKT) is domain II. A domain III, AAA+ region region spans residues 118 to 335 (GLNSNHLFEN…GALNRVIANA (218 aa)). ATP contacts are provided by G163, G165, K166, and T167. The domain IV, binds dsDNA stretch occupies residues 336–455 (EFTGKTITID…WSNLIRTLSA (120 aa)).

It belongs to the DnaA family. Oligomerizes as a right-handed, spiral filament on DNA at oriC.

It localises to the cytoplasm. Functionally, plays an essential role in the initiation and regulation of chromosomal replication. ATP-DnaA binds to the origin of replication (oriC) to initiate formation of the DNA replication initiation complex once per cell cycle. Binds the DnaA box (a 9 base pair repeat at the origin) and separates the double-stranded (ds)DNA. Forms a right-handed helical filament on oriC DNA; dsDNA binds to the exterior of the filament while single-stranded (ss)DNA is stabiized in the filament's interior. The ATP-DnaA-oriC complex binds and stabilizes one strand of the AT-rich DNA unwinding element (DUE), permitting loading of DNA polymerase. After initiation quickly degrades to an ADP-DnaA complex that is not apt for DNA replication. Binds acidic phospholipids. In Actinobacillus succinogenes (strain ATCC 55618 / DSM 22257 / CCUG 43843 / 130Z), this protein is Chromosomal replication initiator protein DnaA.